A 345-amino-acid chain; its full sequence is Phosphate acyltransferase (345 aa).

Belongs to the PlsX family. In terms of assembly, homodimer. Probably interacts with PlsY.

Its subcellular location is the cytoplasm. It carries out the reaction a fatty acyl-[ACP] + phosphate = an acyl phosphate + holo-[ACP]. It functions in the pathway lipid metabolism; phospholipid metabolism. Catalyzes the reversible formation of acyl-phosphate (acyl-PO(4)) from acyl-[acyl-carrier-protein] (acyl-ACP). This enzyme utilizes acyl-ACP as fatty acyl donor, but not acyl-CoA. The chain is Phosphate acyltransferase from Trichlorobacter lovleyi (strain ATCC BAA-1151 / DSM 17278 / SZ) (Geobacter lovleyi).